The following is a 236-amino-acid chain: UPF0173 metal-dependent hydrolase Mnod_3315 (236 aa).

Belongs to the UPF0173 family.

The chain is UPF0173 metal-dependent hydrolase Mnod_3315 from Methylobacterium nodulans (strain LMG 21967 / CNCM I-2342 / ORS 2060).